The following is a 250-amino-acid chain: Type III pantothenate kinase (250 aa).

Position 6-13 (6-13) interacts with ATP; sequence DVGNTNTV. Position 103 to 106 (103 to 106) interacts with substrate; that stretch reads GADR. Residue Asp105 is the Proton acceptor of the active site. Asp125 is a binding site for K(+). An ATP-binding site is contributed by Thr128. Thr180 is a binding site for substrate.

Belongs to the type III pantothenate kinase family. As to quaternary structure, homodimer. It depends on NH4(+) as a cofactor. K(+) serves as cofactor.

It localises to the cytoplasm. The enzyme catalyses (R)-pantothenate + ATP = (R)-4'-phosphopantothenate + ADP + H(+). It functions in the pathway cofactor biosynthesis; coenzyme A biosynthesis; CoA from (R)-pantothenate: step 1/5. Functionally, catalyzes the phosphorylation of pantothenate (Pan), the first step in CoA biosynthesis. This chain is Type III pantothenate kinase, found in Frankia casuarinae (strain DSM 45818 / CECT 9043 / HFP020203 / CcI3).